A 170-amino-acid polypeptide reads, in one-letter code: Photosystem I assembly protein Ycf3 (170 aa).

TPR repeat units follow at residues 35-68, 72-105, and 120-153; these read AFTY…EVDA, SYIL…NPSL, and GEQA…APTN.

Belongs to the Ycf3 family.

It is found in the plastid. The protein resides in the chloroplast thylakoid membrane. Functionally, essential for the assembly of the photosystem I (PSI) complex. May act as a chaperone-like factor to guide the assembly of the PSI subunits. The sequence is that of Photosystem I assembly protein Ycf3 from Tetradesmus obliquus (Green alga).